The sequence spans 213 residues: mRNA-decapping protein OPG121 (213 aa).

2 residues coordinate N(7)-methyl-GTP: Glu16 and Arg50. In terms of domain architecture, Nudix hydrolase spans 30 to 209; sequence KDTHVFAACI…EYLSYIYNML (180 aa). The Nudix box signature appears at 111-132; it reads GKLDKKESIKDCLRRELKEESD. Mg(2+) contacts are provided by Glu117, Glu126, Glu130, Asp151, and Glu183. The Nucleophile role is filled by Glu126. Asp151 provides a ligand contact to N(7)-methyl-GTP.

This sequence belongs to the Nudix hydrolase family. Mg(2+) is required as a cofactor. Mn(2+) serves as cofactor.

The catalysed reaction is a 5'-end (N(7)-methyl 5'-triphosphoguanosine)-guanosine in mRNA + H2O = a 5'-end phospho-guanosine in mRNA + N(7)-methyl-GDP + 2 H(+). In terms of biological role, decapping enzyme that remove the protective 5'-cap from both host and viral mRNAs to commit transcripts for decay by the cellular exonuclease XRN1. Accelerates viral and cellular mRNA turnover to eliminate competing host mRNAs and allow stage-specific synthesis of viral proteins. Acceleration of the turnover of cellular transcripts may even promote the shutoff of host protein synthesis. This chain is mRNA-decapping protein OPG121 (OPG121), found in Homo sapiens (Human).